The primary structure comprises 217 residues: Adenylate kinase (217 aa).

Gly-10–Thr-15 lines the ATP pocket. An NMP region spans residues Ser-30–Val-59. Residues Thr-31, Arg-36, Ala-57–Val-59, Gly-85–Arg-88, and Gln-92 each bind AMP. The tract at residues Gly-126 to Asp-163 is LID. Arg-127 is a binding site for ATP. Residues Cys-130, Cys-133, Cys-150, and Cys-153 each contribute to the Zn(2+) site. Arg-160 and Arg-171 together coordinate AMP. Gly-199 is an ATP binding site.

Belongs to the adenylate kinase family. In terms of assembly, monomer.

Its subcellular location is the cytoplasm. The catalysed reaction is AMP + ATP = 2 ADP. The protein operates within purine metabolism; AMP biosynthesis via salvage pathway; AMP from ADP: step 1/1. Functionally, catalyzes the reversible transfer of the terminal phosphate group between ATP and AMP. Plays an important role in cellular energy homeostasis and in adenine nucleotide metabolism. In Geotalea uraniireducens (strain Rf4) (Geobacter uraniireducens), this protein is Adenylate kinase.